The primary structure comprises 270 residues: NADPH-dependent 7-cyano-7-deazaguanine reductase (270 aa).

79-81 (IES) is a binding site for substrate. Residue 81–82 (SK) coordinates NADPH. The active-site Thioimide intermediate is the cysteine 177. Aspartate 184 acts as the Proton donor in catalysis. 216–217 (HE) is a substrate binding site. 245 to 246 (RG) provides a ligand contact to NADPH.

Belongs to the GTP cyclohydrolase I family. QueF type 2 subfamily. Homodimer.

It is found in the cytoplasm. The catalysed reaction is 7-aminomethyl-7-carbaguanine + 2 NADP(+) = 7-cyano-7-deazaguanine + 2 NADPH + 3 H(+). Its pathway is tRNA modification; tRNA-queuosine biosynthesis. In terms of biological role, catalyzes the NADPH-dependent reduction of 7-cyano-7-deazaguanine (preQ0) to 7-aminomethyl-7-deazaguanine (preQ1). In Acinetobacter baumannii (strain ATCC 17978 / DSM 105126 / CIP 53.77 / LMG 1025 / NCDC KC755 / 5377), this protein is NADPH-dependent 7-cyano-7-deazaguanine reductase.